Reading from the N-terminus, the 50-residue chain is Sperm protamine P1 (50 aa).

2 disulfides stabilise this stretch: cysteine 7–cysteine 15 and cysteine 38–cysteine 46.

It belongs to the protamine P1 family. As to quaternary structure, cross-linked by interchain disulfide bonds around the DNA-helix. As to expression, testis.

Its subcellular location is the nucleus. It is found in the chromosome. Protamines substitute for histones in the chromatin of sperm during the haploid phase of spermatogenesis. They compact sperm DNA into a highly condensed, stable and inactive complex. This is Sperm protamine P1 (PRM1) from Equus asinus (Donkey).